A 456-amino-acid chain; its full sequence is Glutamyl-tRNA reductase (456 aa).

Substrate is bound by residues 49–52 (TCNR), Ser109, 114–116 (EQQ), and Gln120. Catalysis depends on Cys50, which acts as the Nucleophile. Position 189-194 (189-194 (GAGSMG)) interacts with NADP(+).

Belongs to the glutamyl-tRNA reductase family. As to quaternary structure, homodimer.

It catalyses the reaction (S)-4-amino-5-oxopentanoate + tRNA(Glu) + NADP(+) = L-glutamyl-tRNA(Glu) + NADPH + H(+). It participates in porphyrin-containing compound metabolism; protoporphyrin-IX biosynthesis; 5-aminolevulinate from L-glutamyl-tRNA(Glu): step 1/2. In terms of biological role, catalyzes the NADPH-dependent reduction of glutamyl-tRNA(Glu) to glutamate 1-semialdehyde (GSA). The polypeptide is Glutamyl-tRNA reductase (Mycolicibacterium vanbaalenii (strain DSM 7251 / JCM 13017 / BCRC 16820 / KCTC 9966 / NRRL B-24157 / PYR-1) (Mycobacterium vanbaalenii)).